The sequence spans 194 residues: uncharacterized protein (194 aa).

This is an uncharacterized protein from Rickettsia prowazekii (strain Madrid E).